Here is a 503-residue protein sequence, read N- to C-terminus: Protein O-glucosyltransferase 3 (503 aa).

The first 19 residues, 1–19 (MQALPLGLQLALLVAAGAG), serve as a signal peptide directing secretion. The Filamin repeat unit spans residues 19–129 (GARVSAPRSL…VAHSPYILKG (111 aa)). 2 N-linked (GlcNAc...) asparagine glycosylation sites follow: Asn-56 and Asn-302. The Prevents secretion from ER signature appears at 500-503 (REEL).

Belongs to the KDELC family.

Its subcellular location is the endoplasmic reticulum lumen. The catalysed reaction is L-seryl-[EGF-like domain protein] + UDP-alpha-D-glucose = 3-O-(beta-D-glucosyl)-L-seryl-[EGF-like domain protein] + UDP + H(+). It catalyses the reaction L-seryl-[EGF-like domain protein] + UDP-alpha-D-xylose = 3-O-(beta-D-xylosyl)-L-seryl-[EGF-like domain protein] + UDP + H(+). It functions in the pathway protein modification; protein glycosylation. Functionally, protein glucosyltransferase that catalyzes the transfer of glucose from UDP-glucose to a serine residue within the consensus sequence peptide C-X-N-T-X-G-S-F-X-C. Can also catalyze the transfer of xylose from UDP-xylose but less efficiently. Specifically targets extracellular EGF repeats of proteins such as NOTCH1, NOTCH3, FBN1, FBN2 and LTBP1. May regulate the transport of NOTCH1 and NOTCH3 to the plasma membrane and thereby the Notch signaling pathway. The chain is Protein O-glucosyltransferase 3 (Poglut3) from Mus musculus (Mouse).